The primary structure comprises 321 residues: uncharacterized protein (321 aa).

The protein belongs to the NAD(P)-dependent epimerase/dehydratase family.

This is an uncharacterized protein from Staphylococcus aureus (strain bovine RF122 / ET3-1).